A 109-amino-acid polypeptide reads, in one-letter code: Probable cytochrome b-c1 complex subunit 7 (109 aa).

It belongs to the UQCRB/QCR7 family. As to quaternary structure, component of the ubiquinol-cytochrome c oxidoreductase (cytochrome b-c1 complex, complex III, CIII), a multisubunit enzyme composed of 3 respiratory subunits cytochrome b, cytochrome c1 and Rieske protein, 2 core protein subunits, and additional low-molecular weight protein subunits. The complex exists as an obligatory dimer and forms supercomplexes (SCs) in the inner mitochondrial membrane with cytochrome c oxidase (complex IV, CIV).

The protein localises to the mitochondrion inner membrane. Its function is as follows. Component of the ubiquinol-cytochrome c oxidoreductase, a multisubunit transmembrane complex that is part of the mitochondrial electron transport chain which drives oxidative phosphorylation. The respiratory chain contains 3 multisubunit complexes succinate dehydrogenase (complex II, CII), ubiquinol-cytochrome c oxidoreductase (cytochrome b-c1 complex, complex III, CIII) and cytochrome c oxidase (complex IV, CIV), that cooperate to transfer electrons derived from NADH and succinate to molecular oxygen, creating an electrochemical gradient over the inner membrane that drives transmembrane transport and the ATP synthase. The cytochrome b-c1 complex catalyzes electron transfer from ubiquinol to cytochrome c, linking this redox reaction to translocation of protons across the mitochondrial inner membrane, with protons being carried across the membrane as hydrogens on the quinol. In the process called Q cycle, 2 protons are consumed from the matrix, 4 protons are released into the intermembrane space and 2 electrons are passed to cytochrome c. In Dictyostelium discoideum (Social amoeba), this protein is Probable cytochrome b-c1 complex subunit 7.